The following is a 2003-amino-acid chain: Histone acetyltransferase KAT6A (2003 aa).

An SAMD1-like winged helix (WH) domain is found at 1–77 (MVKLANPLYT…LNSYKDPDNP (77 aa)). The interval 1–144 (MVKLANPLYT…CGGSAAPGFH (144 aa)) is required for activation of RUNX1-1. Residues 52-166 (ELSVKDGTIL…HGRLLKDGPL (115 aa)) form a required for nuclear localization region. One can recognise an H15 domain in the interval 95 to 171 (QSVDWNKLLK…KDGPLYRLNT (77 aa)). The interval 144–663 (HQQLRLAIKR…RKGYGRFLID (520 aa)) is interaction with PML. Lys-172 is subject to N6-acetyllysine. 2 consecutive PHD-type zinc fingers follow at residues 206–265 (IPIC…CKTC) and 262–313 (CKTC…CRPR). Residues 312–663 (PRKKGRKLLQ…RKGYGRFLID (352 aa)) are interaction with RUNX1-1. The tract at residues 336–377 (GRPKNRLKKQNTVSKGPFSKVRTGPGRGRKRKITVSSQSASS) is disordered. Residues Lys-350 and Lys-355 each carry the N6-acetyllysine modification. A Phosphothreonine; by PKB/AKT1 modification is found at Thr-369. Ser-419 is modified (phosphoserine). The interval 439-466 (RKKGNRKSSTSDWPTDNQDGWESKQENE) is disordered. Positions 445 to 458 (KSSTSDWPTDNQDG) are enriched in polar residues. Ser-472 is modified (phosphoserine). Residues 487 to 777 (IQEQALQKVG…VDPECLRWTP (291 aa)) are catalytic. The 275-residue stretch at 503–777 (PQVRCPSVIE…VDPECLRWTP (275 aa)) folds into the MYST-type HAT domain. Positions 506 to 809 (RCPSVIEFGK…EPQGQERELE (304 aa)) are mediates interaction with BRPF1, required for histone H3 acetyltransferase activity. The C2HC MYST-type zinc finger occupies 536 to 561 (LYLCEFCLKYMKSRTILQQHMKKCGW). An N6-acetyllysine; by autocatalysis modification is found at Lys-603. Acetyl-CoA is bound by residues 644–648 (SCIMI) and 653–659 (QRKGYGR). Glu-679 acts as the Proton donor/acceptor in catalysis. Ser-683 is an acetyl-CoA binding site. A disordered region spans residues 784-939 (VVSEDEDEEA…DGKPDIPKGR (156 aa)). Ser-786 carries the post-translational modification Phosphoserine. Over residues 786-798 (SEDEDEEADEGEK) the composition is skewed to acidic residues. Residues 799–841 (EEPQGQERELETRVKVGKSVSREKKDQESSSLIETDKKPEVKE) are compositionally biased toward basic and acidic residues. N6-acetyllysine is present on residues Lys-813 and Lys-816. Residue Lys-836 forms a Glycyl lysine isopeptide (Lys-Gly) (interchain with G-Cter in SUMO2) linkage. Residues 866-875 (RRGRCGRKNR) show a composition bias toward basic residues. Residues 876 to 890 (KTQERFGDKDSKMLV) are compositionally biased toward basic and acidic residues. Tyr-901 is subject to Phosphotyrosine. Residues 904–917 (CEEKSETSQERFTE) are compositionally biased toward basic and acidic residues. Phosphoserine is present on residues Ser-941 and Ser-954. Residues 983–1083 (GFSESSEEEE…EEEESELFPR (101 aa)) are disordered. Lys-1007 bears the N6-acetyllysine mark. A compositionally biased stretch (basic residues) spans 1009–1030 (TLKRKKPILHRRRRVRKRKHHN). The span at 1031-1042 (SSVVTETISETT) shows a compositional bias: low complexity. Acidic residues-rich tracts occupy residues 1043–1053 (EVLDEPFEDSD) and 1065–1079 (FEME…EESE). A phosphoserine mark is found at Ser-1090, Ser-1091, and Ser-1115. Disordered stretches follow at residues 1096–1174 (RCQS…RKPG), 1197–1438 (IKPG…GAYQ), 1455–1533 (HTDE…PSVS), 1546–1568 (DLGS…STMG), and 1631–1707 (TCVV…CSMN). A compositionally biased stretch (acidic residues) spans 1107 to 1120 (EEEEEEEESDDADD). A compositionally biased stretch (polar residues) spans 1136 to 1147 (NSASLEPDTSTP). A compositionally biased stretch (basic residues) spans 1148–1174 (MKKKKGWPKGKSRKPIHWKKRPGRKPG). The segment covering 1204-1229 (RTQENEEIVEVKEDLLEERKEEMHTE) has biased composition (basic and acidic residues). 2 stretches are compositionally biased toward acidic residues: residues 1230–1241 (PDEEAEEEEDTT) and 1282–1299 (EEPQ…DEVT). Positions 1317–1334 (HLDSLKTKEPEEQPARED) are enriched in basic and acidic residues. Lys-1336 participates in a covalent cross-link: Glycyl lysine isopeptide (Lys-Gly) (interchain with G-Cter in SUMO2). 2 stretches are compositionally biased toward basic and acidic residues: residues 1352–1361 (DSRENTKDKD) and 1393–1414 (DSNT…HSEL). Low complexity predominate over residues 1473–1490 (HNSPISSIPSHPSQSVRS). Polar residues-rich tracts occupy residues 1502–1523 (GYTQ…NMET) and 1550–1568 (IEST…STMG). The segment at 1511–1636 (GSLSAPSMQN…KSPQTCVVER (126 aa)) is interaction with RUNX1-2. Positions 1511–1740 (GSLSAPSMQN…YERIPGDFGA (230 aa)) are interaction with PML. Pro residues-rich tracts occupy residues 1640 to 1673 (NQQP…PPQP) and 1682 to 1698 (QPPP…PQQQ). Residues 1912-1947 (SMNMNTLNAMNSYRMTQPMMNSSYHSNPAYMNQTAQ) are required for activation of RUNX1-2.

Belongs to the MYST (SAS/MOZ) family. In terms of assembly, component of the MOZ/MORF complex composed at least of ING5, KAT6A, KAT6B, MEAF6 and one of BRPF1, BRD1/BRPF2 and BRPF3. Interacts with RUNX2. Interacts with RUNX1; phosphorylation of RUNX1 enhances the interaction. Interacts with p53/TP53. Interacts with PML and this interaction positively regulates its acetylation activity towards p53/TP53. Autoacetylated. Autoacetylation at Lys-603 is required for proper function. Post-translationally, phosphorylation at Thr-369 by PKB/AKT1 inhibits its interaction with PML and negatively regulates its acetylation activity towards p53/TP53.

The protein localises to the nucleus. It is found in the nucleolus. It localises to the nucleoplasm. Its subcellular location is the PML body. The enzyme catalyses L-lysyl-[protein] + acetyl-CoA = N(6)-acetyl-L-lysyl-[protein] + CoA + H(+). Its function is as follows. Histone acetyltransferase that acetylates lysine residues in histone H3 and histone H4 (in vitro). Component of the MOZ/MORF complex which has a histone H3 acetyltransferase activity. May act as a transcriptional coactivator for RUNX1 and RUNX2. Acetylates p53/TP53 at 'Lys-120' and 'Lys-382' and controls its transcriptional activity via association with PML. The chain is Histone acetyltransferase KAT6A (Kat6a) from Mus musculus (Mouse).